Here is a 355-residue protein sequence, read N- to C-terminus: Serum paraoxonase/arylesterase 1 (355 aa).

Cys-42 and Cys-353 form a disulfide bridge. Ca(2+) contacts are provided by Glu-53 and Asp-54. Residue His-115 is the Proton acceptor of the active site. The Ca(2+) site is built by Ile-117, Asn-168, Asp-169, and Asn-224. A glycan (N-linked (GlcNAc...) asparagine) is linked at Asn-253. 2 residues coordinate Ca(2+): Asp-269 and Asn-270. N-linked (GlcNAc...) asparagine glycans are attached at residues Asn-270 and Asn-324.

The protein belongs to the paraoxonase family. Homodimer. Interacts with CLU. Ca(2+) is required as a cofactor. Glycosylated. In terms of processing, the signal sequence is not cleaved. In terms of tissue distribution, plasma. Associated with HDL.

The protein resides in the secreted. Its subcellular location is the extracellular space. It catalyses the reaction a phenyl acetate + H2O = a phenol + acetate + H(+). The catalysed reaction is An aryl dialkyl phosphate + H2O = dialkyl phosphate + an aryl alcohol.. It carries out the reaction an N-acyl-L-homoserine lactone + H2O = an N-acyl-L-homoserine + H(+). Its function is as follows. Hydrolyzes the toxic metabolites of a variety of organophosphorus insecticides. Capable of hydrolyzing a broad spectrum of organophosphate substrates and lactones, and a number of aromatic carboxylic acid esters. Mediates an enzymatic protection of low density lipoproteins against oxidative modification. This chain is Serum paraoxonase/arylesterase 1 (Pon1), found in Rattus norvegicus (Rat).